A 148-amino-acid polypeptide reads, in one-letter code: Deoxyuridine 5'-triphosphate nucleotidohydrolase (148 aa).

Substrate is bound by residues 68-70 (RSG), N81, 85-87 (TID), and K95.

The protein belongs to the dUTPase family. Mg(2+) is required as a cofactor.

It catalyses the reaction dUTP + H2O = dUMP + diphosphate + H(+). The protein operates within pyrimidine metabolism; dUMP biosynthesis; dUMP from dCTP (dUTP route): step 2/2. This enzyme is involved in nucleotide metabolism: it produces dUMP, the immediate precursor of thymidine nucleotides and it decreases the intracellular concentration of dUTP so that uracil cannot be incorporated into DNA. The chain is Deoxyuridine 5'-triphosphate nucleotidohydrolase from Thermoanaerobacter sp. (strain X514).